The primary structure comprises 101 residues: Small ribosomal subunit protein uS14 (101 aa).

It belongs to the universal ribosomal protein uS14 family. As to quaternary structure, part of the 30S ribosomal subunit. Contacts proteins S3 and S10.

Binds 16S rRNA, required for the assembly of 30S particles and may also be responsible for determining the conformation of the 16S rRNA at the A site. This chain is Small ribosomal subunit protein uS14, found in Phenylobacterium zucineum (strain HLK1).